The primary structure comprises 193 residues: Small COPII coat GTPase SAR1 (193 aa).

The STAR; SAR1-N-terminal activation recruitment. Required for the activation and subsequent recruitment to ER membrane signature appears at 3–5; it reads FLW. The mediates recruitment to ER membranes stretch occupies residues 11–15; the sequence is VLNML. Asp30 contacts Mg(2+). Positions 31, 32, 33, 34, 35, and 36 each coordinate GDP. Residue Asn31 participates in GTP binding. GTP-binding residues include Gly33, Lys34, Thr35, and Thr36. Residue Asp71 participates in Mg(2+) binding. Residues Asn130, Lys131, Asp133, Val176, and Leu177 each contribute to the GDP site. Residues Asn130, Lys131, Asp133, Val176, and Leu177 each contribute to the GTP site.

Belongs to the small GTPase superfamily. SAR1 family. As to quaternary structure, homodimer; upon association with membrane. Part of the coat protein complex II/COPII, composed of SEC23/24 and SEC13/31 heterodimers, that it helps recruit and assemble on endoplasmic reticulum (ER) membranes at ER exit sites.

Its subcellular location is the endoplasmic reticulum membrane. The protein resides in the golgi apparatus. The protein localises to the golgi stack membrane. It localises to the cytoplasm. It is found in the cytosol. It carries out the reaction GTP + H2O = GDP + phosphate + H(+). Small GTPases activation is mediated by guanine exchange factors (GEF), while inactivation through hydrolysis of the bound GTP is stimulated by GTPase activating proteins (GAP). Its function is as follows. Small GTPase that cycles between an active GTP-bound and an inactive GDP-bound state and mainly functions in vesicle-mediated endoplasmic reticulum (ER) to Golgi transport. The active GTP-bound form inserts into the endoplasmic reticulum membrane where it recruits the remainder of the coat protein complex II/COPII. The coat protein complex II assembling and polymerizing on endoplasmic reticulum membrane is responsible for both the sorting of cargos and the deformation and budding of membranes into vesicles destined to the Golgi. Plays a role in transporting the tyrosine kinase receptor let-23 from the endoplasmic reticulum to the plasma membrane of vulval precursor cells. The polypeptide is Small COPII coat GTPase SAR1 (Caenorhabditis elegans).